The sequence spans 238 residues: 1-(5-phosphoribosyl)-5-[(5-phosphoribosylamino)methylideneamino] imidazole-4-carboxamide isomerase (238 aa).

The Proton acceptor role is filled by Asp8. The active-site Proton donor is the Asp129.

It belongs to the HisA/HisF family.

The protein resides in the cytoplasm. The catalysed reaction is 1-(5-phospho-beta-D-ribosyl)-5-[(5-phospho-beta-D-ribosylamino)methylideneamino]imidazole-4-carboxamide = 5-[(5-phospho-1-deoxy-D-ribulos-1-ylimino)methylamino]-1-(5-phospho-beta-D-ribosyl)imidazole-4-carboxamide. The protein operates within amino-acid biosynthesis; L-histidine biosynthesis; L-histidine from 5-phospho-alpha-D-ribose 1-diphosphate: step 4/9. The protein is 1-(5-phosphoribosyl)-5-[(5-phosphoribosylamino)methylideneamino] imidazole-4-carboxamide isomerase of Anaeromyxobacter dehalogenans (strain 2CP-C).